The sequence spans 417 residues: MSQQLAKEISQRAAKAARAVATLSETDKNAVLQKMADAIRARQDKIIEVNKKDLATGKEKGLSDAMMDRLELTPERVEGMASAIEEIIALKDPVGDSYVLDERPNGMKIEKMRIPLGVICMIYEARPNVTADAGALCFKSGNAVILRCGREAIESSKAIAEALHEALEASNLPKDVITVVPTPDRELMTELLQQKDYIDLVIPRGGEGLIHFVSDTSKIPVIQHYKGVCHLYVDKDADLDKALAILLNGKTQRTGVCNALEGLLVHQDVADKFLPMAAKALAEKDVTIHADKRSVSYFDGADEIADDAFGEEYLALEIAVRTVDNYEGAIEHIQEFGSGHTEVIITENDETAKRFIREVDSAVTMANVSSRFSDGGQLGLGAEIGISTSKLHAYGPMGLEALTTEKFVVTGNGQVRD.

The protein belongs to the gamma-glutamyl phosphate reductase family.

The protein resides in the cytoplasm. It catalyses the reaction L-glutamate 5-semialdehyde + phosphate + NADP(+) = L-glutamyl 5-phosphate + NADPH + H(+). The protein operates within amino-acid biosynthesis; L-proline biosynthesis; L-glutamate 5-semialdehyde from L-glutamate: step 2/2. Functionally, catalyzes the NADPH-dependent reduction of L-glutamate 5-phosphate into L-glutamate 5-semialdehyde and phosphate. The product spontaneously undergoes cyclization to form 1-pyrroline-5-carboxylate. The sequence is that of Gamma-glutamyl phosphate reductase from Idiomarina loihiensis (strain ATCC BAA-735 / DSM 15497 / L2-TR).